The sequence spans 653 residues: Large subunit GTPase 1 homolog (653 aa).

A disordered region spans residues 1 to 31 (MGRRRAPAGGSLGRALMRHQTQRSRSHRHTD). Residues 16-28 (LMRHQTQRSRSHR) show a composition bias toward basic residues. 2 positions are modified to phosphoserine: S93 and S97. In terms of domain architecture, CP-type G spans 164–445 (WRQLWRVIER…LCDCPGLVMP (282 aa)). Residue 212–215 (NKAD) participates in GTP binding. Residues 251–358 (DSEEEANKDD…RKTPQKRQLH (108 aa)) form a disordered region. A Phosphoserine modification is found at S252. The span at 258-288 (KDDRQSNTAEFEHSSFDEAEISHSETEHLPA) shows a compositional bias: basic and acidic residues. Positions 299–333 (TTDEDDSEYEDCPEEEEDDWQTCSEEDGPEEEDCG) are enriched in acidic residues. GTP is bound by residues 394–401 (GYPNVGKS) and 438–441 (DCPG). The tract at residues 630 to 653 (SENGAGKPWKKHGNRNKKEKSCRL) is disordered. Residues 637–647 (PWKKHGNRNKK) show a composition bias toward basic residues.

The protein belongs to the TRAFAC class YlqF/YawG GTPase family. LSG1 subfamily.

Its subcellular location is the cytoplasm. The protein localises to the endoplasmic reticulum. The protein resides in the nucleus. It localises to the cajal body. The catalysed reaction is GTP + H2O = GDP + phosphate + H(+). Functions as a GTPase. May act by mediating the release of NMD3 from the 60S ribosomal subunit after export into the cytoplasm during the 60S ribosomal subunit maturation. This is Large subunit GTPase 1 homolog from Macaca fascicularis (Crab-eating macaque).